The sequence spans 409 residues: Elongation factor Tu, chloroplastic (409 aa).

The 205-residue stretch at 10–214 folds into the tr-type G domain; the sequence is KPHVNIGTIG…TVDAYIPTPE (205 aa). The interval 19–26 is G1; that stretch reads GHVDHGKT. 19–26 contributes to the GTP binding site; the sequence is GHVDHGKT. Threonine 26 provides a ligand contact to Mg(2+). A G2 region spans residues 60–64; the sequence is GITIN. The segment at 81–84 is G3; it reads DCPG. Residues 81 to 85 and 136 to 139 contribute to the GTP site; these read DCPGH and NKED. Residues 136–139 form a G4 region; that stretch reads NKED. The tract at residues 174–176 is G5; the sequence is SAL.

The protein belongs to the TRAFAC class translation factor GTPase superfamily. Classic translation factor GTPase family. EF-Tu/EF-1A subfamily.

The protein localises to the plastid. The protein resides in the chloroplast. It catalyses the reaction GTP + H2O = GDP + phosphate + H(+). GTP hydrolase that promotes the GTP-dependent binding of aminoacyl-tRNA to the A-site of ribosomes during protein biosynthesis. The polypeptide is Elongation factor Tu, chloroplastic (tufA) (Pleurastrum terricola (Filamentous green alga)).